A 465-amino-acid chain; its full sequence is WASH complex subunit 1 (465 aa).

Residues 1–54 (MTPVRMQHSLAGQTYAVPFIQPDLRREEAVQQMADALQYLQKVSGDIFSRISQQ) form a required for WASH complex assembly region. Residues 1-167 (MTPVRMQHSL…EGLGGLPSNI (167 aa)) are WHD1. Residue K220 forms a Glycyl lysine isopeptide (Lys-Gly) (interchain with G-Cter in ubiquitin) linkage. 3 disordered regions span residues 297 to 359 (QDGV…VDPS), 376 to 407 (GKAK…QGGH), and 423 to 465 (ISGK…DWES). The span at 302–314 (TPPPPPPPPPPAP) shows a compositional bias: pro residues. The tract at residues 349–465 (QGAPREVVDP…AEEDEDDWES (117 aa)) is VCA. One can recognise a WH2 domain in the interval 361-383 (GWATLLESIRQAGGIGKAKLRSM). A compositionally biased stretch (basic and acidic residues) spans 382–398 (SMKERKLEKQQQKEQEQ). The segment covering 424–436 (SGKGPGAGEGPGG) has biased composition (gly residues). Residues 456–465 (AEEDEDDWES) show a composition bias toward acidic residues.

The protein belongs to the WASH1 family. As to quaternary structure, component of the WASH core complex also described as WASH regulatory complex (SHRC) composed of WASH (WASHC1, WASH2P or WASH3P), WASHC2 (WASHC2A or WASHC2C), WASHC3, WASHC4 and WASHC5. The WASH core complex associates via WASHC2 with the F-actin-capping protein dimer (formed by CAPZA1, CAPZA2 or CAPZA3 and CAPZB) in a transient or substoichiometric manner which was initially described as WASH complex. Interacts (via WHD1 region) with WASHC2C; the interaction is direct. Interacts with VPS35; mediates the association with the retromer CSC complex. Interacts with FKBP15. Interacts with alpha-tubulin. Interacts with BECN1; this interaction can be competed out by AMBRA1 binding. Interacts with BLOC1S2; may associate with the BLOC-1 complex. Interacts with tubulin gamma chain (TUBG1 or TUBG2). Interacts with EXOC1, EXOC4, EXOC8; in MMP14-positive endosomes in breast tumor cells; indicative for an association with the exocyst complex. Interacts with TBC1D23. Post-translationally, ubiquitinated at Lys-220 via 'Lys-63'-linked ubiquitin chains by the TRIM27:MAGEL2 E3 ubiquitin ligase complex, leading to promote endosomal F-actin assembly.

It is found in the early endosome membrane. The protein resides in the recycling endosome membrane. Its subcellular location is the late endosome. It localises to the cytoplasmic vesicle. The protein localises to the autophagosome. It is found in the cytoplasm. The protein resides in the cytoskeleton. Its subcellular location is the microtubule organizing center. It localises to the centrosome. The protein localises to the centriole. Functionally, acts as a component of the WASH core complex that functions as a nucleation-promoting factor (NPF) at the surface of endosomes, where it recruits and activates the Arp2/3 complex to induce actin polymerization, playing a key role in the fission of tubules that serve as transport intermediates during endosome sorting. Involved in endocytic trafficking of EGF. Involved in transferrin receptor recycling. Regulates the trafficking of endosomal alpha5beta1 integrin to the plasma membrane and involved in invasive cell migration. In T-cells involved in endosome-to-membrane recycling of receptors including T-cell receptor (TCR), CD28 and ITGAL; proposed to be implicated in T cell proliferation and effector function. In dendritic cells involved in endosome-to-membrane recycling of major histocompatibility complex (MHC) class II probably involving retromer and subsequently allowing antigen sampling, loading and presentation during T-cell activation. Involved in Arp2/3 complex-dependent actin assembly driving Salmonella typhimurium invasion independent of ruffling. Involved in the exocytosis of MMP14 leading to matrix remodeling during invasive migration and implicating late endosome-to-plasma membrane tubular connections and cooperation with the exocyst complex. Involved in negative regulation of autophagy independently from its role in endosomal sorting by inhibiting BECN1 ubiquitination to inactivate PIK3C3/Vps34 activity. The sequence is that of WASH complex subunit 1 from Homo sapiens (Human).